Reading from the N-terminus, the 290-residue chain is NAD kinase (290 aa).

Aspartate 72 functions as the Proton acceptor in the catalytic mechanism. Residues 72 to 73 (DG), 146 to 147 (NE), arginine 174, aspartate 176, and 187 to 192 (TAYALS) each bind NAD(+).

The protein belongs to the NAD kinase family. A divalent metal cation serves as cofactor.

The protein localises to the cytoplasm. It carries out the reaction NAD(+) + ATP = ADP + NADP(+) + H(+). Its function is as follows. Involved in the regulation of the intracellular balance of NAD and NADP, and is a key enzyme in the biosynthesis of NADP. Catalyzes specifically the phosphorylation on 2'-hydroxyl of the adenosine moiety of NAD to yield NADP. This Methylococcus capsulatus (strain ATCC 33009 / NCIMB 11132 / Bath) protein is NAD kinase.